Here is a 361-residue protein sequence, read N- to C-terminus: 3,6-anhydro-alpha-L-galactonate cycloisomerase (361 aa).

The active-site Proton acceptor is the Lys166. 3 residues coordinate Mg(2+): Asp195, Glu221, and Glu247. His297 (proton donor/acceptor) is an active-site residue.

This sequence belongs to the mandelate racemase/muconate lactonizing enzyme family. Requires Mg(2+) as cofactor.

The enzyme catalyses 3,6-anhydro-L-galactonate = 2-dehydro-3-deoxy-L-galactonate. Involved in the degradation of 3,6-anhydro-L-galactose, which is the major monomeric sugar of red macroalgae. Catalyzes the isomerization of 3,6-anhydrogalactonate (AHGA) to 2-keto-3-deoxy-galactonate (KDGal). This chain is 3,6-anhydro-alpha-L-galactonate cycloisomerase, found in Streptomyces coelicolor (strain ATCC BAA-471 / A3(2) / M145).